A 277-amino-acid chain; its full sequence is Pantothenate synthetase (277 aa).

26–33 (MGNLHEGH) contacts ATP. H33 (proton donor) is an active-site residue. Q57 is a binding site for (R)-pantoate. Position 57 (Q57) interacts with beta-alanine. 144 to 147 (GKKD) contributes to the ATP binding site. Q150 provides a ligand contact to (R)-pantoate. ATP is bound by residues V173 and 181-184 (LSSR).

The protein belongs to the pantothenate synthetase family. In terms of assembly, homodimer.

The protein localises to the cytoplasm. The enzyme catalyses (R)-pantoate + beta-alanine + ATP = (R)-pantothenate + AMP + diphosphate + H(+). It functions in the pathway cofactor biosynthesis; (R)-pantothenate biosynthesis; (R)-pantothenate from (R)-pantoate and beta-alanine: step 1/1. In terms of biological role, catalyzes the condensation of pantoate with beta-alanine in an ATP-dependent reaction via a pantoyl-adenylate intermediate. This Paraburkholderia xenovorans (strain LB400) protein is Pantothenate synthetase.